The following is a 107-amino-acid chain: MIRILYLLVKPESMSHEQFRKECVVHFQMSAGMPGLHKYEVRLVAGNPTDTHVPYLDVGRIDAIGECWFASEEQYQVYMESDIRKAWFEHGKYFIGQLKPFVTEELV.

Residue His26 is the Proton donor/acceptor of the active site. The 3-methylmuconolactone site is built by His26 and Tyr39. 4-methylmuconolactone-binding residues include His26 and Tyr39.

This sequence belongs to the MmlI family. As to quaternary structure, homodimer.

It carries out the reaction 4-methylmuconolactone = 3-methylmuconolactone. Inhibited by p-chloromercuribenzoate. Its function is as follows. Isomerase involved in the degradation of 4-methylsalicylate and 5-methylsalicylate. Catalyzes the isomerization of the dead-end metabolite 4-methylmuconolactone (4-ML) to 3-methylmuconolactone (3-ML), which can then be further degraded through a modified 3-oxoadipate pathway. Can also use 1-methylbislactone but not 3-methyl-cis,cis-muconate. The polypeptide is 4-carboxymethyl-4-methylbutenolide mutase (Pseudomonas reinekei).